Reading from the N-terminus, the 300-residue chain is MGMQGRSFARQIRAYVSLTKPRVVELLLLTTVPTMILAQRGVPNPLSVLSVLLGGAMSAGAAGAFNCYIDRDIDSKMSRTRNRPLVTGALSPKASLIFAWMLCVISVLWFLLFVNWLSALLSAIAVFLYAFFYSIVLKKRTPQNIVWGGLAGCMPVLIAWAAVTGSIDWPAIVLFAVVFLWTPPHYWPLSIHYSEDYRLTSIPMLGAIFPRKLVVLQVLLYAFAVVACTLLLIPVAHMTPLYGLFSAVLGAWFVYEIYRLYVRVVRGHEIKAMHIFSLSNTYLSLVFLSVGIDGVVSQLL.

The next 9 membrane-spanning stretches (helical) occupy residues 21 to 43 (PRVV…RGVP), 45 to 65 (PLSV…AGAF), 94 to 114 (ASLI…LLFV), 117 to 137 (LSAL…SIVL), 145 to 167 (IVWG…TGSI), 171 to 193 (AIVL…SIHY), 213 to 233 (LVVL…LLLI), 235 to 255 (VAHM…WFVY), and 272 to 292 (AMHI…SVGI).

Belongs to the UbiA prenyltransferase family. Protoheme IX farnesyltransferase subfamily.

The protein resides in the cell membrane. It catalyses the reaction heme b + (2E,6E)-farnesyl diphosphate + H2O = Fe(II)-heme o + diphosphate. The protein operates within porphyrin-containing compound metabolism; heme O biosynthesis; heme O from protoheme: step 1/1. Functionally, converts heme B (protoheme IX) to heme O by substitution of the vinyl group on carbon 2 of heme B porphyrin ring with a hydroxyethyl farnesyl side group. The sequence is that of Protoheme IX farnesyltransferase from Tropheryma whipplei (strain TW08/27) (Whipple's bacillus).